Reading from the N-terminus, the 814-residue chain is G-type lectin S-receptor-like serine/threonine-protein kinase At1g61400 (814 aa).

Residues 1–34 (MDFLFLLLERKNKHMGKKRVVLLWLSIFISFSSA) form the signal peptide. One can recognise a Bulb-type lectin domain in the interval 35 to 154 (EITEESPLSI…VSGRTLWESF (120 aa)). Residues 35 to 436 (EITEESPLSI…ELDVNKRKKT (402 aa)) are Extracellular-facing. N-linked (GlcNAc...) asparagine glycosylation is found at Asn-63, Asn-104, Asn-127, and Asn-246. An EGF-like; atypical domain is found at 288–324 (PANSCDIYGVCGPFGFCVISVPPKCKCFKGFIPKSIE). 2 disulfide bridges follow: Cys-292–Cys-304 and Cys-298–Cys-312. Asn-330, Asn-346, and Asn-385 each carry an N-linked (GlcNAc...) asparagine glycan. A PAN domain is found at 343–425 (CQGNSTGKDA…GELLSIRLAR (83 aa)). 2 disulfides stabilise this stretch: Cys-378–Cys-399 and Cys-382–Cys-388. A helical transmembrane segment spans residues 437 to 457 (IIAITVSLTLFVILGFTAFGF). Over 458–814 (WRRRVEQNAL…EMTESVIHGR (357 aa)) the chain is Cytoplasmic. In terms of domain architecture, Protein kinase spans 500-785 (FSLSNKLGHG…DLPLPKQPTF (286 aa)). ATP contacts are provided by residues 506-514 (LGHGGFGSV) and Lys-528. 2 positions are modified to phosphoserine: Ser-534 and Ser-549. The interval 589–606 (KKRLEIDWPKRFDIIQGI) is caM-binding. Asp-625 (proton acceptor) is an active-site residue. A phosphoserine mark is found at Ser-629 and Ser-642. Thr-659 bears the Phosphothreonine mark. Phosphoserine is present on residues Ser-702 and Ser-796.

This sequence belongs to the protein kinase superfamily. Ser/Thr protein kinase family.

The protein localises to the cell membrane. The catalysed reaction is L-seryl-[protein] + ATP = O-phospho-L-seryl-[protein] + ADP + H(+). It catalyses the reaction L-threonyl-[protein] + ATP = O-phospho-L-threonyl-[protein] + ADP + H(+). The sequence is that of G-type lectin S-receptor-like serine/threonine-protein kinase At1g61400 from Arabidopsis thaliana (Mouse-ear cress).